Here is a 142-residue protein sequence, read N- to C-terminus: Large ribosomal subunit protein uL11 (142 aa).

Belongs to the universal ribosomal protein uL11 family. As to quaternary structure, part of the ribosomal stalk of the 50S ribosomal subunit. Interacts with L10 and the large rRNA to form the base of the stalk. L10 forms an elongated spine to which L12 dimers bind in a sequential fashion forming a multimeric L10(L12)X complex. One or more lysine residues are methylated.

In terms of biological role, forms part of the ribosomal stalk which helps the ribosome interact with GTP-bound translation factors. This is Large ribosomal subunit protein uL11 from Cronobacter sakazakii (strain ATCC BAA-894) (Enterobacter sakazakii).